We begin with the raw amino-acid sequence, 177 residues long: Interleukin-1 receptor antagonist protein (177 aa).

Positions 1–25 (MEVSRYLCSYLISFLLFLFHSETAC) are cleaved as a signal peptide. Cysteines 91 and 141 form a disulfide. Asparagine 109 carries an N-linked (GlcNAc...) asparagine glycan.

It belongs to the IL-1 family.

The protein localises to the secreted. Functionally, anti-inflammatory antagonist of interleukin-1 family of proinflammatory cytokines such as interleukin-1beta/IL1B and interleukin-1alpha/IL1A. Protects from immune dysregulation and uncontrolled systemic inflammation triggered by IL1 for a range of innate stimulatory agents such as pathogens. This Sus scrofa (Pig) protein is Interleukin-1 receptor antagonist protein (IL1RN).